The chain runs to 124 residues: Small ribosomal subunit protein uS12cz/uS12cy (124 aa).

It belongs to the universal ribosomal protein uS12 family. Part of the 30S ribosomal subunit.

It localises to the plastid. It is found in the chloroplast. In terms of biological role, with S4 and S5 plays an important role in translational accuracy. Located at the interface of the 30S and 50S subunits. This chain is Small ribosomal subunit protein uS12cz/uS12cy (rps12-A), found in Agrostis stolonifera (Creeping bentgrass).